We begin with the raw amino-acid sequence, 638 residues long: Phenylethylamine oxidase (638 aa).

A propeptide spanning residues 1–2 (MT) is cleaved from the precursor. Residue 296-307 (YFDTGEYLVGQY) participates in substrate binding. Catalysis depends on D298, which acts as the Proton acceptor. C317 and C343 are joined by a disulfide. Residue 379–384 (IGNYDY) participates in substrate binding. The active-site Schiff-base intermediate with substrate; via topaquinone is the Y382. Y382 bears the 2',4',5'-topaquinone mark. H431, H433, and H592 together coordinate Cu cation.

The protein belongs to the copper/topaquinone oxidase family. In terms of assembly, homodimer. It depends on Cu cation as a cofactor. Requires L-topaquinone as cofactor. Post-translationally, topaquinone (TPQ) is generated by copper-dependent autoxidation of a specific tyrosyl residue.

The enzyme catalyses a primary methyl amine + O2 + H2O = an aldehyde + H2O2 + NH4(+). It catalyses the reaction 2-phenylethylamine + O2 + H2O = 2-phenylacetaldehyde + H2O2 + NH4(+). Catalyzes the oxidative deamination of phenylethylamine to phenylacetaldehyde with the concomitant production of hydrogen peroxide and ammonia. This chain is Phenylethylamine oxidase, found in Arthrobacter globiformis.